A 136-amino-acid polypeptide reads, in one-letter code: Translation initiation factor 5A (136 aa).

Lys37 is modified (hypusine).

It belongs to the eIF-5A family.

Its subcellular location is the cytoplasm. In terms of biological role, functions by promoting the formation of the first peptide bond. The protein is Translation initiation factor 5A of Thermococcus kodakarensis (strain ATCC BAA-918 / JCM 12380 / KOD1) (Pyrococcus kodakaraensis (strain KOD1)).